Here is a 914-residue protein sequence, read N- to C-terminus: Translation initiation factor IF-2 (914 aa).

The disordered stretch occupies residues 58–160 (KTEKKQTAKK…EAEPKIEVMP (103 aa)). Residues 70-91 (KKDTVKKDTVKKTAVKKDDSKA) are compositionally biased toward basic and acidic residues. The segment covering 92 to 103 (AKKTKPIAKKSA) has biased composition (basic residues). Basic and acidic residues predominate over residues 104-160 (PKTEKKVEKKVESKISKPDNEILEAKPEISKPEIKAEPKKEEIEQKQEAEPKIEVMP). The region spanning 413 to 582 (ERVPVITIMG…LLQADLLELK (170 aa)) is the tr-type G domain. Residues 422–429 (GHVDHGKT) are G1. Position 422–429 (422–429 (GHVDHGKT)) interacts with GTP. Residues 447–451 (GITQH) form a G2 region. The G3 stretch occupies residues 468 to 471 (DTPG). Residues 468–472 (DTPGH) and 522–525 (NKMD) each bind GTP. Positions 522–525 (NKMD) are G4. Positions 558–560 (SAK) are G5.

The protein belongs to the TRAFAC class translation factor GTPase superfamily. Classic translation factor GTPase family. IF-2 subfamily.

The protein resides in the cytoplasm. In terms of biological role, one of the essential components for the initiation of protein synthesis. Protects formylmethionyl-tRNA from spontaneous hydrolysis and promotes its binding to the 30S ribosomal subunits. Also involved in the hydrolysis of GTP during the formation of the 70S ribosomal complex. The chain is Translation initiation factor IF-2 from Campylobacter hominis (strain ATCC BAA-381 / DSM 21671 / CCUG 45161 / LMG 19568 / NCTC 13146 / CH001A).